Reading from the N-terminus, the 312-residue chain is uncharacterized protein (312 aa).

Residues M1–A28 form the signal peptide.

Functionally, the FAS-operon encodes genes involved in cytokinin production and in host plant fasciation (leafy gall). This is an uncharacterized protein from Rhodococcoides fascians (Rhodococcus fascians).